The following is a 212-amino-acid chain: N-(5'-phosphoribosyl)anthranilate isomerase (212 aa).

It belongs to the TrpF family.

It catalyses the reaction N-(5-phospho-beta-D-ribosyl)anthranilate = 1-(2-carboxyphenylamino)-1-deoxy-D-ribulose 5-phosphate. It participates in amino-acid biosynthesis; L-tryptophan biosynthesis; L-tryptophan from chorismate: step 3/5. The polypeptide is N-(5'-phosphoribosyl)anthranilate isomerase (Cereibacter sphaeroides (strain ATCC 17029 / ATH 2.4.9) (Rhodobacter sphaeroides)).